The chain runs to 164 residues: DNA-directed RNA polymerase 19 kDa subunit (164 aa).

The segment covering 1–35 has biased composition (acidic residues); that stretch reads MADTDDIIDYESDDLTEYEDDDEEEEDGESLETSD. The interval 1 to 39 is disordered; sequence MADTDDIIDYESDDLTEYEDDDEEEEDGESLETSDIDPK.

This sequence belongs to the poxviridae DNA-directed RNA polymerase 19 kDa subunit family. As to quaternary structure, the DNA-dependent RNA polymerase used for intermediate and late genes expression consists of eight subunits Rpo30/OPG66, Rpo7/OPG90, Rpo22/OPG103, Rpo147/OPG105, Rpo18/OPG119, Rpo19/OPG131, Rpo132/OPG151 and Rpo35/OPG156. The same holoenzyme, with the addition of the transcription-specificity factor OPG109, is used for early gene expression.

Its subcellular location is the virion. The enzyme catalyses RNA(n) + a ribonucleoside 5'-triphosphate = RNA(n+1) + diphosphate. In terms of biological role, part of the DNA-dependent RNA polymerase which catalyzes the transcription of viral DNA into RNA using the four ribonucleoside triphosphates as substrates. Responsible for the transcription of early, intermediate and late genes. DNA-dependent RNA polymerase associates with the early transcription factor (ETF), itself composed of OPG118 and OPG133, thereby allowing the early genes transcription. Late transcription, and probably also intermediate transcription, require newly synthesized RNA polymerase. This chain is DNA-directed RNA polymerase 19 kDa subunit (OPG131), found in Variola virus (isolate Human/India/Ind3/1967) (VARV).